Here is a 430-residue protein sequence, read N- to C-terminus: Tol-Pal system protein TolB (430 aa).

The N-terminal stretch at 1–21 (MKQAFRVALGFFLLWASVLHA) is a signal peptide.

This sequence belongs to the TolB family. As to quaternary structure, the Tol-Pal system is composed of five core proteins: the inner membrane proteins TolA, TolQ and TolR, the periplasmic protein TolB and the outer membrane protein Pal. They form a network linking the inner and outer membranes and the peptidoglycan layer.

The protein localises to the periplasm. Part of the Tol-Pal system, which plays a role in outer membrane invagination during cell division and is important for maintaining outer membrane integrity. TolB occupies a key intermediary position in the Tol-Pal system because it communicates directly with both membrane-embedded components, Pal in the outer membrane and TolA in the inner membrane. The protein is Tol-Pal system protein TolB of Sodalis glossinidius (strain morsitans).